A 363-amino-acid chain; its full sequence is Peptide chain release factor 1 (363 aa).

Residue Q237 is modified to N5-methylglutamine. A compositionally biased stretch (basic and acidic residues) spans E284–R297. Residues E284–S306 are disordered.

Belongs to the prokaryotic/mitochondrial release factor family. Post-translationally, methylated by PrmC. Methylation increases the termination efficiency of RF1.

The protein localises to the cytoplasm. Its function is as follows. Peptide chain release factor 1 directs the termination of translation in response to the peptide chain termination codons UAG and UAA. This is Peptide chain release factor 1 from Halorhodospira halophila (strain DSM 244 / SL1) (Ectothiorhodospira halophila (strain DSM 244 / SL1)).